We begin with the raw amino-acid sequence, 157 residues long: Large ribosomal subunit protein uL3 (157 aa).

The interval 57 to 98 is disordered; it reads GKGFAGSIKRHNQSRGPESHGSRYHRRPGSMGPIKGKLKGKK.

This sequence belongs to the universal ribosomal protein uL3 family. As to quaternary structure, part of the 50S ribosomal subunit. Forms a cluster with proteins L14 and L19.

One of the primary rRNA binding proteins, it binds directly near the 3'-end of the 23S rRNA, where it nucleates assembly of the 50S subunit. This chain is Large ribosomal subunit protein uL3 (rplC), found in Onion yellows phytoplasma (strain OY-M).